We begin with the raw amino-acid sequence, 275 residues long: NH(3)-dependent NAD(+) synthetase (275 aa).

46–53 (GISGGQDS) lines the ATP pocket. Asp-52 is a binding site for Mg(2+). Deamido-NAD(+) is bound at residue Arg-140. Residue Thr-160 participates in ATP binding. Glu-165 contacts Mg(2+). Deamido-NAD(+) contacts are provided by Lys-173 and Asp-180. ATP is bound by residues Lys-189 and Thr-211. Residue 260–261 (HK) participates in deamido-NAD(+) binding.

The protein belongs to the NAD synthetase family. As to quaternary structure, homodimer.

It catalyses the reaction deamido-NAD(+) + NH4(+) + ATP = AMP + diphosphate + NAD(+) + H(+). The protein operates within cofactor biosynthesis; NAD(+) biosynthesis; NAD(+) from deamido-NAD(+) (ammonia route): step 1/1. Catalyzes the ATP-dependent amidation of deamido-NAD to form NAD. Uses ammonia as a nitrogen source. In Escherichia coli O157:H7, this protein is NH(3)-dependent NAD(+) synthetase.